The following is a 290-amino-acid chain: MYG1 protein CPn_0489/CP_0265/CPj0489/CpB0509 (290 aa).

The protein belongs to the MYG1 family.

This is MYG1 protein CPn_0489/CP_0265/CPj0489/CpB0509 from Chlamydia pneumoniae (Chlamydophila pneumoniae).